Here is a 525-residue protein sequence, read N- to C-terminus: ADP-ribosylation factor GTPase-activating protein 3 (525 aa).

The 117-residue stretch at 10–126 (LAIFKRLRSV…IKTLATQATR (117 aa)) folds into the Arf-GAP domain. The C4-type zinc-finger motif lies at 25 to 48 (CFDCGAKNPSWASISYGVFLCIDC). Positions 160–233 (VSGATQASAQ…KGLGAKKGSL (74 aa)) are disordered. A compositionally biased stretch (polar residues) spans 162 to 177 (GATQASAQPEPASSTP). Low complexity predominate over residues 222–233 (AKKGLGAKKGSL). A phosphoserine mark is found at Ser232, Ser242, Ser271, and Ser275. A disordered region spans residues 249-271 (QAQAVDKRKEQEDLARGTPKEES). Residues 293 to 305 (LNLSGQKKAEAER) show a composition bias toward basic and acidic residues. Disordered stretches follow at residues 293–364 (LNLS…SSSR) and 377–428 (FSSW…EAQK). A compositionally biased stretch (polar residues) spans 319 to 333 (HSVTSDMQTIEQESP). A Phosphoserine modification is found at Ser332. Over residues 349-363 (SYFSSSSKWSEQSSS) the composition is skewed to low complexity. Ser379 is modified (phosphoserine). The segment covering 387 to 398 (YWKKDSSRDPEP) has biased composition (basic and acidic residues). A phosphoserine mark is found at Ser437, Ser460, Ser462, Ser464, Ser466, and Ser467.

It localises to the cytoplasm. The protein localises to the golgi apparatus membrane. GAP activity stimulated by phosphatidylinositol 4,5-bisphosphate (PIP2). Functionally, GTPase-activating protein (GAP) for ADP ribosylation factor 1 (ARF1). Hydrolysis of ARF1-bound GTP may lead to dissociation of coatomer from Golgi-derived membranes to allow fusion with target membranes. This Rattus norvegicus (Rat) protein is ADP-ribosylation factor GTPase-activating protein 3.